The chain runs to 937 residues: Outer membrane usher protein CS3-2 (937 aa).

It belongs to the fimbrial export usher family. Post-translationally, a 97 kDa form of the protein is thought to be due to post-translational processing of isoform 104 kDa.

It is found in the cell outer membrane. In terms of biological role, these proteins are essential for the biogenesis of mature CS3 pili, but not for synthesis of the CS3 pilin subunit. This Escherichia coli protein is Outer membrane usher protein CS3-2.